The following is a 520-amino-acid chain: Keratin, type II cytoskeletal 4 (520 aa).

A head region spans residues 1-136; the sequence is MIARQQCVRG…DPEIQKVRTE (136 aa). Arginine 13 carries the post-translational modification Omega-N-methylarginine. The tract at residues 137–172 is coil 1A; that stretch reads EREQIKLLNNKFASFIDKVQFLEQQNKVLETKWNLL. An IF rod domain is found at 137 to 450; that stretch reads EREQIKLLNN…KLLEGEEYRM (314 aa). The segment at 173–191 is linker 1; the sequence is QQQTTTTSSKNLEPLFETY. A coil 1B region spans residues 192–284; the sequence is LSVLRKQLDT…LYDAELSQMQ (93 aa). The interval 285 to 307 is linker 12; it reads THVSDTSVVLSMDNNRNLDLDSI. Residues 308–447 form a coil 2 region; that stretch reads IAEVRAQYEE…TYRKLLEGEE (140 aa). The tract at residues 448-520 is tail; the sequence is YRMSGECQSA…ISTTTLNKRR (73 aa). Residues 500–520 form a disordered region; sequence GSVSGSSSSKIISTTTLNKRR. Low complexity predominate over residues 503–514; it reads SGSSSSKIISTT.

The protein belongs to the intermediate filament family. Heterotetramer of two type I and two type II keratins. Keratin-4 is generally associated with keratin-13. Detected in the suprabasal layer of the stratified epithelium of the esophagus, exocervix, vagina, mouth and lingual mucosa, and in cells and cell clusters in the mucosa and serous gland ducts of the esophageal submucosa (at protein level). Expressed widely in the exocervix and esophageal epithelium, with lowest levels detected in the basal cell layer.

The polypeptide is Keratin, type II cytoskeletal 4 (KRT4) (Homo sapiens (Human)).